We begin with the raw amino-acid sequence, 200 residues long: Probable DNA-directed RNA polymerase subunit delta (200 aa).

The 70-residue stretch at 19 to 88 (LSMIEVARAI…GDNKWGLRSW (70 aa)) folds into the HTH HARE-type domain. 2 stretches are compositionally biased toward acidic residues: residues 125-143 (DSDAIDYNADDPEDEDAYE) and 150-200 (YDDE…TSEE). The interval 125–200 (DSDAIDYNAD…SDDDAETSEE (76 aa)) is disordered.

This sequence belongs to the RpoE family. RNAP is composed of a core of 2 alpha, a beta and a beta' subunits. The core is associated with a delta subunit and one of several sigma factors.

Its function is as follows. Participates in both the initiation and recycling phases of transcription. In the presence of the delta subunit, RNAP displays an increased specificity of transcription, a decreased affinity for nucleic acids, and an increased efficiency of RNA synthesis because of enhanced recycling. This chain is Probable DNA-directed RNA polymerase subunit delta, found in Streptococcus pneumoniae serotype 4 (strain ATCC BAA-334 / TIGR4).